A 214-amino-acid chain; its full sequence is uncharacterized protein (214 aa).

The protein belongs to the uracil-DNA glycosylase (UDG) superfamily.

This is an uncharacterized protein from Haemophilus influenzae (strain ATCC 51907 / DSM 11121 / KW20 / Rd).